The primary structure comprises 396 residues: Phosphopentomutase (396 aa).

Mn(2+) contacts are provided by Asp13, Asp288, His293, Asp329, His330, and His341.

The protein belongs to the phosphopentomutase family. Mn(2+) serves as cofactor.

Its subcellular location is the cytoplasm. It catalyses the reaction 2-deoxy-alpha-D-ribose 1-phosphate = 2-deoxy-D-ribose 5-phosphate. The catalysed reaction is alpha-D-ribose 1-phosphate = D-ribose 5-phosphate. It functions in the pathway carbohydrate degradation; 2-deoxy-D-ribose 1-phosphate degradation; D-glyceraldehyde 3-phosphate and acetaldehyde from 2-deoxy-alpha-D-ribose 1-phosphate: step 1/2. Functionally, isomerase that catalyzes the conversion of deoxy-ribose 1-phosphate (dRib-1-P) and ribose 1-phosphate (Rib-1-P) to deoxy-ribose 5-phosphate (dRib-5-P) and ribose 5-phosphate (Rib-5-P), respectively. The chain is Phosphopentomutase from Clostridium perfringens (strain ATCC 13124 / DSM 756 / JCM 1290 / NCIMB 6125 / NCTC 8237 / Type A).